A 347-amino-acid chain; its full sequence is N-acetyl-gamma-glutamyl-phosphate reductase (347 aa).

The active site involves Cys150.

The protein belongs to the NAGSA dehydrogenase family. Type 1 subfamily.

It localises to the cytoplasm. It catalyses the reaction N-acetyl-L-glutamate 5-semialdehyde + phosphate + NADP(+) = N-acetyl-L-glutamyl 5-phosphate + NADPH + H(+). It functions in the pathway amino-acid biosynthesis; L-arginine biosynthesis; N(2)-acetyl-L-ornithine from L-glutamate: step 3/4. Catalyzes the NADPH-dependent reduction of N-acetyl-5-glutamyl phosphate to yield N-acetyl-L-glutamate 5-semialdehyde. The chain is N-acetyl-gamma-glutamyl-phosphate reductase from Leifsonia xyli subsp. xyli (strain CTCB07).